We begin with the raw amino-acid sequence, 718 residues long: Homeobox-leucine zipper protein HDG9 (718 aa).

Positions 1–12 (MDFTRDDNSSDE) are enriched in basic and acidic residues. The segment at 1–35 (MDFTRDDNSSDERENDVDANTNNRHEKKGYHRHTN) is disordered. Positions 26 to 85 (EKKGYHRHTNEQIHRLETYFKECPHPDEFQRRLLGEELNLKPKQIKFWFQNKRTQAKSHN) form a DNA-binding region, homeobox. The stretch at 78-152 (RTQAKSHNEK…LKDEYERVSN (75 aa)) forms a coiled coil. Positions 169–209 (PYLHGPSNHASTSKNRPALYGTSSNRLPEPSSIFRGPYTRG) are disordered. Positions 176–194 (NHASTSKNRPALYGTSSNR) are enriched in polar residues. The START domain maps to 232–464 (SQLEKIAMLE…LERTCERLIF (233 aa)).

Belongs to the HD-ZIP homeobox family. Class IV subfamily. Expressed in anthers with highest levels in the tapetum and pollen grains, and chalazal end of the embryo sac.

The protein resides in the nucleus. Its function is as follows. Probable transcription factor that binds to the DNA sequence 5'-GCATTAAATGCGCA-3'. This chain is Homeobox-leucine zipper protein HDG9 (HDG9), found in Arabidopsis thaliana (Mouse-ear cress).